Reading from the N-terminus, the 538-residue chain is MPTNCISYPETNYFTPLILDYLSEKKELSNFYHRFPEIENFGAQITEKKKSYDHTIRKDLIQVLNDQYSKLTVSENTRANIDALESKNTFTVVTGHQLNLFTGPLYFLYKIISTINLTKKLKEKYPENNFVPIYWMATEDHDFEEINFFNLNGKKFKWNNADDRAGKTAVGGLSTEGLDEVFKLFSAEIGGGENAEFLKSTFEKGYLEHDTLSDATRFIANEIFGKYGLVIVAAGDKRLKKHFIPNVGSELVEHSSHKQTTETLQKINSLGYNIQVNPRDINLFYLTDEIRERIIERDGNYFVHETEISWTKEEILQELKDHPERFSPNVMTRPLYQEVILPNLCYIGGGGELAYWLELKSYFEAENVTFPMLLLRNSAMLQTGKQNDKREKLKISIQELFLKQHELINRKVRKISDIDIDFSGQKEHLVEQFQHMYDLAEKTDESFIGAVKAQEVKQLKGLDHLEKRLLKAQKRKLKDEVERIAELQNDLFPNRSLQERQTNFSEFYVEYGEELINKLMEELDPLESNFKILTFGRE.

A coiled-coil region spans residues 462–533 (LDHLEKRLLK…DPLESNFKIL (72 aa)).

It belongs to the BshC family.

The polypeptide is Putative cysteine ligase BshC (Christiangramia forsetii (strain DSM 17595 / CGMCC 1.15422 / KT0803) (Gramella forsetii)).